The chain runs to 197 residues: NADH-quinone oxidoreductase subunit C (197 aa).

The protein belongs to the complex I 30 kDa subunit family. As to quaternary structure, NDH-1 is composed of 14 different subunits. Subunits NuoB, C, D, E, F, and G constitute the peripheral sector of the complex.

It is found in the cell inner membrane. The enzyme catalyses a quinone + NADH + 5 H(+)(in) = a quinol + NAD(+) + 4 H(+)(out). NDH-1 shuttles electrons from NADH, via FMN and iron-sulfur (Fe-S) centers, to quinones in the respiratory chain. The immediate electron acceptor for the enzyme in this species is believed to be ubiquinone. Couples the redox reaction to proton translocation (for every two electrons transferred, four hydrogen ions are translocated across the cytoplasmic membrane), and thus conserves the redox energy in a proton gradient. The polypeptide is NADH-quinone oxidoreductase subunit C (Caulobacter vibrioides (strain ATCC 19089 / CIP 103742 / CB 15) (Caulobacter crescentus)).